The primary structure comprises 285 residues: MKYVGAHVSAAGGLANAAIRAAEIEATAFALFTKNQRQWRAAPLTPEIINDFKAACEKYNFGPGQILPHDSYLINLGHPVQEALDKSREAFLDELQRCEQLGLTLLNFHPGSHLMQIDEDACLARIAESINIALAQTEGVTAVIENTAGQGSNLGFKFEHLAAIIDGVEDKTRVGVCIDTCHAFAAGYDLRSQEECEKTFAEFERIVGFKYLRGMHLNDAKSAFGSRVDRHHSLGEGNIGHDAFRFIMQDPRFDGIPMVLETVNPDIWAEEIAWLKAQQTAEQAA.

Positions 69, 109, 145, 179, 182, 216, 229, 231, and 261 each coordinate Zn(2+).

The protein belongs to the AP endonuclease 2 family. Requires Zn(2+) as cofactor.

It carries out the reaction Endonucleolytic cleavage to 5'-phosphooligonucleotide end-products.. Functionally, endonuclease IV plays a role in DNA repair. It cleaves phosphodiester bonds at apurinic or apyrimidinic (AP) sites, generating a 3'-hydroxyl group and a 5'-terminal sugar phosphate. In Enterobacter sp. (strain 638), this protein is Probable endonuclease 4.